The sequence spans 137 residues: MLSGRLVLGLVSMAGRVCLCQGSAGSGAIGPVEAAIRTKLEEALSPEVLELRNESGGHAVPPGSETHFRVAVVSSRFEGLSPLQRHRLVHAALAEELGGPVHALAIQARTPAQWRENSQLDTSPPCLGGNKKTLGTP.

Residue S81 is modified to Phosphoserine. A disordered region spans residues 114–137; sequence WRENSQLDTSPPCLGGNKKTLGTP.

The protein belongs to the BolA/IbaG family. In terms of assembly, interacts with GLRX5. In terms of tissue distribution, widely expressed.

It localises to the mitochondrion. Acts as a mitochondrial iron-sulfur (Fe-S) cluster assembly factor that facilitates (Fe-S) cluster insertion into a subset of mitochondrial proteins. Probably acts together with the monothiol glutaredoxin GLRX5. May protect cells against oxidative stress. This chain is BolA-like protein 1, found in Homo sapiens (Human).